A 391-amino-acid polypeptide reads, in one-letter code: Dual-specificity RNA methyltransferase RlmN (391 aa).

Glu-112 functions as the Proton acceptor in the catalytic mechanism. The region spanning 118–368 (ESDRGTLCIS…VRTPRGRDIL (251 aa)) is the Radical SAM core domain. Cys-125 and Cys-371 are disulfide-bonded. 3 residues coordinate [4Fe-4S] cluster: Cys-132, Cys-136, and Cys-139. Residues 197–198 (GE), Ser-229, 251–253 (SLH), and Asn-328 each bind S-adenosyl-L-methionine. Cys-371 acts as the S-methylcysteine intermediate in catalysis.

This sequence belongs to the radical SAM superfamily. RlmN family. The cofactor is [4Fe-4S] cluster.

It localises to the cytoplasm. It carries out the reaction adenosine(2503) in 23S rRNA + 2 reduced [2Fe-2S]-[ferredoxin] + 2 S-adenosyl-L-methionine = 2-methyladenosine(2503) in 23S rRNA + 5'-deoxyadenosine + L-methionine + 2 oxidized [2Fe-2S]-[ferredoxin] + S-adenosyl-L-homocysteine. The catalysed reaction is adenosine(37) in tRNA + 2 reduced [2Fe-2S]-[ferredoxin] + 2 S-adenosyl-L-methionine = 2-methyladenosine(37) in tRNA + 5'-deoxyadenosine + L-methionine + 2 oxidized [2Fe-2S]-[ferredoxin] + S-adenosyl-L-homocysteine. Its function is as follows. Specifically methylates position 2 of adenine 2503 in 23S rRNA and position 2 of adenine 37 in tRNAs. m2A2503 modification seems to play a crucial role in the proofreading step occurring at the peptidyl transferase center and thus would serve to optimize ribosomal fidelity. In Beijerinckia indica subsp. indica (strain ATCC 9039 / DSM 1715 / NCIMB 8712), this protein is Dual-specificity RNA methyltransferase RlmN.